A 217-amino-acid chain; its full sequence is Probable transaldolase (217 aa).

The active-site Schiff-base intermediate with substrate is Lys-84.

This sequence belongs to the transaldolase family. Type 3B subfamily.

The protein resides in the cytoplasm. It carries out the reaction D-sedoheptulose 7-phosphate + D-glyceraldehyde 3-phosphate = D-erythrose 4-phosphate + beta-D-fructose 6-phosphate. It participates in carbohydrate degradation; pentose phosphate pathway; D-glyceraldehyde 3-phosphate and beta-D-fructose 6-phosphate from D-ribose 5-phosphate and D-xylulose 5-phosphate (non-oxidative stage): step 2/3. Transaldolase is important for the balance of metabolites in the pentose-phosphate pathway. The polypeptide is Probable transaldolase (Roseiflexus sp. (strain RS-1)).